A 462-amino-acid polypeptide reads, in one-letter code: Toxin CfTX-2 (462 aa).

An N-terminal signal peptide occupies residues 1–17 (MILVSLLPLLFMTGIAS).

This sequence belongs to the jellyfish toxin family. Type I subfamily. As to quaternary structure, oligomer. Post-translationally, contains disulfide bonds. Nematocytes.

The protein localises to the secreted. The protein resides in the nematocyst. It is found in the target cell membrane. Functionally, may cause profound effects on the cardiovascular system of anesthetized rats (at 25 ug/kg), since the fraction containing this toxin and CfTX-1 produces an initial increase in mean arterial pressure, followed by cardiovascular collapse in all animals within 1 minute of injection. To note, the same fraction does not induce significant change in heart rate. Has weak hemolytic activity. Is lethal to crayfish. Causes cutaneous inflammation in humans. May act as a pore-forming toxin, disrupting normal transmembrane ion concentration gradients in susceptible cells. The sequence is that of Toxin CfTX-2 from Chironex fleckeri (Australian box jellyfish).